A 46-amino-acid polypeptide reads, in one-letter code: DNA-directed RNA polymerase subunit Rpo12 (46 aa).

Zn(2+) contacts are provided by cysteine 9, cysteine 24, and cysteine 27.

It belongs to the archaeal Rpo12/eukaryotic RPC10 RNA polymerase subunit family. As to quaternary structure, part of the RNA polymerase complex. Interacts with Rpo3. Forms an Rpo3-Rpo10-Rpo11-Rpo12 complex upon coexpression. Zn(2+) serves as cofactor.

It is found in the cytoplasm. The catalysed reaction is RNA(n) + a ribonucleoside 5'-triphosphate = RNA(n+1) + diphosphate. Functionally, DNA-dependent RNA polymerase (RNAP) catalyzes the transcription of DNA into RNA using the four ribonucleoside triphosphates as substrates. This Methanocaldococcus jannaschii (strain ATCC 43067 / DSM 2661 / JAL-1 / JCM 10045 / NBRC 100440) (Methanococcus jannaschii) protein is DNA-directed RNA polymerase subunit Rpo12.